The sequence spans 269 residues: Eukaryotic translation initiation factor 3 subunit G-1 (269 aa).

An RRM domain is found at 188–266 (AAIRISNLSE…LILSVEWSKP (79 aa)).

It belongs to the eIF-3 subunit G family. Component of the eukaryotic translation initiation factor 3 (eIF-3) complex. The eIF-3 complex interacts with pix.

It localises to the cytoplasm. RNA-binding component of the eukaryotic translation initiation factor 3 (eIF-3) complex, which is involved in protein synthesis of a specialized repertoire of mRNAs and, together with other initiation factors, stimulates binding of mRNA and methionyl-tRNAi to the 40S ribosome. The eIF-3 complex specifically targets and initiates translation of a subset of mRNAs involved in cell proliferation. This subunit can bind 18S rRNA. This Drosophila persimilis (Fruit fly) protein is Eukaryotic translation initiation factor 3 subunit G-1.